A 154-amino-acid polypeptide reads, in one-letter code: uncharacterized protein (154 aa).

12–19 contacts GTP; sequence GSSDVGKT. Residues 17 to 112 form the G domain; it reads GKTTLMENLI…KIPYGIFINK (96 aa).

To M.thermoautotrophicum MTH765.

This is an uncharacterized protein from Methanocaldococcus jannaschii (strain ATCC 43067 / DSM 2661 / JAL-1 / JCM 10045 / NBRC 100440) (Methanococcus jannaschii).